The chain runs to 197 residues: Nucleoid occlusion factor SlmA (197 aa).

The 61-residue stretch at 7 to 67 folds into the HTH tetR-type domain; sequence INRREHILQC…GLIEFIEESL (61 aa). The H-T-H motif DNA-binding region spans 30–49; that stretch reads TTAKLAAEVGVSEAALYRHF. Positions 109–136 form a coiled coil; it reads DALLGENERLRSRISQLFAKIETHLKQI.

The protein belongs to the nucleoid occlusion factor SlmA family. In terms of assembly, homodimer. Interacts with FtsZ.

It is found in the cytoplasm. It localises to the nucleoid. Its function is as follows. Required for nucleoid occlusion (NO) phenomenon, which prevents Z-ring formation and cell division over the nucleoid. Acts as a DNA-associated cell division inhibitor that binds simultaneously chromosomal DNA and FtsZ, and disrupts the assembly of FtsZ polymers. SlmA-DNA-binding sequences (SBS) are dispersed on non-Ter regions of the chromosome, preventing FtsZ polymerization at these regions. This is Nucleoid occlusion factor SlmA from Shewanella halifaxensis (strain HAW-EB4).